Here is a 139-residue protein sequence, read N- to C-terminus: ATP synthase epsilon chain (139 aa).

It belongs to the ATPase epsilon chain family. As to quaternary structure, F-type ATPases have 2 components, CF(1) - the catalytic core - and CF(0) - the membrane proton channel. CF(1) has five subunits: alpha(3), beta(3), gamma(1), delta(1), epsilon(1). CF(0) has three main subunits: a, b and c.

It localises to the cell inner membrane. Functionally, produces ATP from ADP in the presence of a proton gradient across the membrane. The polypeptide is ATP synthase epsilon chain (Actinobacillus pleuropneumoniae serotype 7 (strain AP76)).